Here is a 579-residue protein sequence, read N- to C-terminus: DBIRD complex subunit ZNF326 (579 aa).

Positions 1 to 124 are mediates transcriptional activation; the sequence is MDFEDDYTHS…YRNSLDSFGG (124 aa). 12 positions are modified to phosphoserine: Ser48, Ser56, Ser63, Ser69, Ser81, Ser82, Ser91, Ser106, Ser114, Ser118, Ser121, and Ser137. Lys140 is covalently cross-linked (Glycyl lysine isopeptide (Lys-Gly) (interchain with G-Cter in SUMO2)). Positions 154–194 are disordered; it reads YSSYSSFSSPHMKPAPVGSRGRGTPAYPESTFGSRNYDAFG. Position 173 is an omega-N-methylarginine (Arg173). The residue at position 212 (Ser212) is a Phosphoserine. Residue Arg235 is modified to Omega-N-methylarginine. The Bipartite nuclear localization signal signature appears at 238–260; it reads KRKMIQPFNKPGGTFIKKPKLAK. Lys240 participates in a covalent cross-link: Glycyl lysine isopeptide (Lys-Gly) (interchain with G-Cter in SUMO2). Lys247 bears the N6-acetyllysine; alternate mark. Lys247 is covalently cross-linked (Glycyl lysine isopeptide (Lys-Gly) (interchain with G-Cter in SUMO2); alternate). Residues 248–302 are disordered; it reads PGGTFIKKPKLAKPVEKMSLSKSPTKTDPKNEEEEKRRIEARREKQRRRREKNSE. The residue at position 251 (Thr251) is a Phosphothreonine. Glycyl lysine isopeptide (Lys-Gly) (interchain with G-Cter in SUMO2) cross-links involve residues Lys254 and Lys264. A Phosphoserine modification is found at Ser270. Residues 272–290 are compositionally biased toward basic and acidic residues; that stretch reads TKTDPKNEEEEKRRIEARR. The C2H2 AKAP95-type 1 zinc finger occupies 314 to 336; that stretch reads CSFCKFRTFEEKDIELHLESASH. A Glycyl lysine isopeptide (Lys-Gly) (interchain with G-Cter in SUMO2) cross-link involves residue Lys401. The C2H2 AKAP95-type 2 zinc finger occupies 407–430; it reads CSACSVYIPALHSSVQQHLKSPDH. Residues Lys459 and Lys467 each participate in a glycyl lysine isopeptide (Lys-Gly) (interchain with G-Cter in SUMO2) cross-link. Residues 470–579 are disordered; it reads NPFEIQDHSQ…GFSVDQAEEN (110 aa). Composition is skewed to acidic residues over residues 483-520, 529-541, and 549-565; these read IEGD…EEVG, GDTE…EGEG, and GEGE…EEAK.

This sequence belongs to the AKAP95 family. In terms of assembly, component of the DBIRD complex. Interacts with CCAR2; the interaction is direct.

Its subcellular location is the nucleus matrix. Core component of the DBIRD complex, a multiprotein complex that acts at the interface between core mRNP particles and RNA polymerase II (RNAPII) and integrates transcript elongation with the regulation of alternative splicing: the DBIRD complex affects local transcript elongation rates and alternative splicing of a large set of exons embedded in (A + T)-rich DNA regions. May play a role in neuronal differentiation and is able to bind DNA and activate expression in vitro. The chain is DBIRD complex subunit ZNF326 (ZNF326) from Bos taurus (Bovine).